The following is a 256-amino-acid chain: 6-carboxyhexanoate--CoA ligase (256 aa).

It belongs to the BioW family. As to quaternary structure, homodimer. Mg(2+) is required as a cofactor.

It catalyses the reaction heptanedioate + ATP + CoA = 6-carboxyhexanoyl-CoA + AMP + diphosphate. The protein operates within metabolic intermediate metabolism; pimeloyl-CoA biosynthesis; pimeloyl-CoA from pimelate: step 1/1. In terms of biological role, catalyzes the transformation of pimelate into pimeloyl-CoA with concomitant hydrolysis of ATP to AMP. The polypeptide is 6-carboxyhexanoate--CoA ligase (Bacillus velezensis (strain DSM 23117 / BGSC 10A6 / LMG 26770 / FZB42) (Bacillus amyloliquefaciens subsp. plantarum)).